A 117-amino-acid polypeptide reads, in one-letter code: MNTQKLFREITEEQFKSDVPAFRPGDTVRVHVKVVEGTRERIQIFEGVVIKRKGGGISETFTVRKISYGVGVERAFPLHSPRVAQIEVVRYGKVRRAKLYYLRNLRGKAARIKEIRR.

It belongs to the bacterial ribosomal protein bL19 family.

Functionally, this protein is located at the 30S-50S ribosomal subunit interface and may play a role in the structure and function of the aminoacyl-tRNA binding site. In Exiguobacterium sp. (strain ATCC BAA-1283 / AT1b), this protein is Large ribosomal subunit protein bL19.